A 332-amino-acid chain; its full sequence is Holliday junction branch migration complex subunit RuvB (332 aa).

The interval 1–181 (MTRFLDSDAM…FGITGHMEYY (181 aa)) is large ATPase domain (RuvB-L). ATP contacts are provided by residues Leu20, Arg21, Gly62, Lys65, Thr66, Thr67, 128–130 (EDF), Arg171, Tyr181, and Arg218. Thr66 lines the Mg(2+) pocket. The interval 182-252 (EENDLTEIIE…ITDKALTMLD (71 aa)) is small ATPAse domain (RuvB-S). The head domain (RuvB-H) stretch occupies residues 255 to 332 (HEGLDYVDQK…EHLGYQRFDK (78 aa)). Positions 291, 310, 312, and 315 each coordinate DNA.

This sequence belongs to the RuvB family. In terms of assembly, homohexamer. Forms an RuvA(8)-RuvB(12)-Holliday junction (HJ) complex. HJ DNA is sandwiched between 2 RuvA tetramers; dsDNA enters through RuvA and exits via RuvB. An RuvB hexamer assembles on each DNA strand where it exits the tetramer. Each RuvB hexamer is contacted by two RuvA subunits (via domain III) on 2 adjacent RuvB subunits; this complex drives branch migration. In the full resolvosome a probable DNA-RuvA(4)-RuvB(12)-RuvC(2) complex forms which resolves the HJ.

The protein resides in the cytoplasm. It carries out the reaction ATP + H2O = ADP + phosphate + H(+). Its function is as follows. The RuvA-RuvB-RuvC complex processes Holliday junction (HJ) DNA during genetic recombination and DNA repair, while the RuvA-RuvB complex plays an important role in the rescue of blocked DNA replication forks via replication fork reversal (RFR). RuvA specifically binds to HJ cruciform DNA, conferring on it an open structure. The RuvB hexamer acts as an ATP-dependent pump, pulling dsDNA into and through the RuvAB complex. RuvB forms 2 homohexamers on either side of HJ DNA bound by 1 or 2 RuvA tetramers; 4 subunits per hexamer contact DNA at a time. Coordinated motions by a converter formed by DNA-disengaged RuvB subunits stimulates ATP hydrolysis and nucleotide exchange. Immobilization of the converter enables RuvB to convert the ATP-contained energy into a lever motion, pulling 2 nucleotides of DNA out of the RuvA tetramer per ATP hydrolyzed, thus driving DNA branch migration. The RuvB motors rotate together with the DNA substrate, which together with the progressing nucleotide cycle form the mechanistic basis for DNA recombination by continuous HJ branch migration. Branch migration allows RuvC to scan DNA until it finds its consensus sequence, where it cleaves and resolves cruciform DNA. This is Holliday junction branch migration complex subunit RuvB from Streptococcus agalactiae serotype Ia (strain ATCC 27591 / A909 / CDC SS700).